The primary structure comprises 399 residues: Probable 3-ketosteroid-9-alpha-monooxygenase, oxygenase component (399 aa).

In terms of domain architecture, Rieske spans 26–128 (WHCLGLVRDF…VAEVSGQLFV (103 aa)). [2Fe-2S] cluster-binding residues include C67, H69, C86, and H89. The Fe cation site is built by N175, H181, H186, and D307.

In terms of assembly, homotrimer. The two-component system 3-ketosteroid-9-alpha-monooxygenase is composed of an oxygenase component KshA and a reductase component KshB. It depends on [2Fe-2S] cluster as a cofactor. Fe cation is required as a cofactor.

In terms of biological role, could catalyze the introduction of a 9alpha-hydroxyl moiety into the ring B of 3-ketosteroid substrates. The chain is Probable 3-ketosteroid-9-alpha-monooxygenase, oxygenase component from Rhodococcus rhodochrous.